We begin with the raw amino-acid sequence, 500 residues long: MSNLPIINFINFNQNGSCISMGTSQGFKIFNCEPFGRFYQDEEGGCGIVEMLFSTSLLAVVGMGDNPAMSPRRLRMLNTKRHSVICEVTFPTTILSVKMNKSRLAVLLQEQIYIYDISNMRLLHTIETSMNAQGIMSMSPNSENNYLVYPSPPKVINSEIKDHATTNNINIKKTDAVDDTIKKDYSLQVPSDITGQQQQQQPGVDPATSNNTANKIIKNGDVIVFNLQTLQPTMVIEAHKGEIAALKLSADGTLLATASEKGTIIRVFNVENGSKVYQFRRGTYPTKISSLSFSKDNQFLAVCSSSKTVHIFKLGKNTVDNKSNELNSDDEIEDDLVPRYGDEDEEDEEIDEEATSINSNHSSKEPVVDAKRSTVGRMIRKSSQRLSRKAARTLGAYFPIKVSSILEPSRHFASLKITTSSNQPIKAIAAIDDPIELSIKEYPDLFEKNASNNGDYQNSDTLTMVPIRVVSSEGFMYKYISDPERGGDCILLEQYSLLSD.

Residues 192-212 form a disordered region; that stretch reads DITGQQQQQQPGVDPATSNNT. 2 WD repeats span residues 238–278 and 283–322; these read AHKG…KVYQ and TYPT…VDNK. The L/FRRG motif motif lies at 279-283; sequence FRRGT. The segment at 320–374 is disordered; sequence DNKSNELNSDDEIEDDLVPRYGDEDEEDEEIDEEATSINSNHSSKEPVVDAKRST. Residues 342 to 354 show a composition bias toward acidic residues; that stretch reads DEDEEDEEIDEEA. Positions 362 to 372 are enriched in basic and acidic residues; the sequence is SSKEPVVDAKR.

This sequence belongs to the WD repeat PROPPIN family. In terms of assembly, component of the PI(3,5)P2 regulatory complex.

The protein localises to the preautophagosomal structure membrane. The protein resides in the vacuole membrane. It localises to the endosome membrane. Its function is as follows. The PI(3,5)P2 regulatory complex regulates both the synthesis and turnover of phosphatidylinositol 3,5-bisphosphate (PtdIns(3,5)P2). Necessary for proper vacuole morphology. Plays an important role in osmotically-induced vacuole fragmentation. Required for cytoplasm to vacuole transport (Cvt) vesicle formation, pexophagy and starvation-induced autophagy. Involved in correct ATG9 trafficking to the pre-autophagosomal structure. Might also be involved in premeiotic DNA replication. In Kluyveromyces lactis (strain ATCC 8585 / CBS 2359 / DSM 70799 / NBRC 1267 / NRRL Y-1140 / WM37) (Yeast), this protein is Autophagy-related protein 18 (ATG18).